The following is a 113-amino-acid chain: Hydrogenase maturation factor HypA (113 aa).

H2 serves as a coordination point for Ni(2+). 4 residues coordinate Zn(2+): C73, C76, C89, and C92.

This sequence belongs to the HypA/HybF family.

Its function is as follows. Involved in the maturation of [NiFe] hydrogenases. Required for nickel insertion into the metal center of the hydrogenase. The sequence is that of Hydrogenase maturation factor HypA from Azotobacter vinelandii.